The following is a 355-amino-acid chain: Ubiquinone biosynthesis protein COQ4 homolog, mitochondrial (355 aa).

H134, D135, H138, and E150 together coordinate Zn(2+).

The protein belongs to the COQ4 family. Component of a multi-subunit COQ enzyme complex. The cofactor is Zn(2+).

It localises to the mitochondrion inner membrane. It catalyses the reaction a 4-hydroxy-3-methoxy-5-(all-trans-polyprenyl)benzoate + H(+) = a 2-methoxy-6-(all-trans-polyprenyl)phenol + CO2. Its pathway is cofactor biosynthesis; ubiquinone biosynthesis. Lyase that catalyzes the C1-decarboxylation of 4-hydroxy-3-methoxy-5-(all-trans-polyprenyl)benzoic acid into 2-methoxy-6-(all-trans-polyprenyl)phenol during ubiquinone biosynthesis. In Plasmodium vivax (strain Salvador I), this protein is Ubiquinone biosynthesis protein COQ4 homolog, mitochondrial.